The following is a 129-amino-acid chain: Small ribosomal subunit protein uS11 (129 aa).

This sequence belongs to the universal ribosomal protein uS11 family. Part of the 30S ribosomal subunit. Interacts with proteins S7 and S18. Binds to IF-3.

Its function is as follows. Located on the platform of the 30S subunit, it bridges several disparate RNA helices of the 16S rRNA. Forms part of the Shine-Dalgarno cleft in the 70S ribosome. The polypeptide is Small ribosomal subunit protein uS11 (Lysinibacillus sphaericus (strain C3-41)).